A 206-amino-acid polypeptide reads, in one-letter code: Protein GrpE (206 aa).

The span at 1-15 (MTDSNGQKDNNQDQA) shows a compositional bias: polar residues. A disordered region spans residues 1-38 (MTDSNGQKDNNQDQAQPADPVVSKPYIMPDDPEEGTNE).

Belongs to the GrpE family. Homodimer.

Its subcellular location is the cytoplasm. Its function is as follows. Participates actively in the response to hyperosmotic and heat shock by preventing the aggregation of stress-denatured proteins, in association with DnaK and GrpE. It is the nucleotide exchange factor for DnaK and may function as a thermosensor. Unfolded proteins bind initially to DnaJ; upon interaction with the DnaJ-bound protein, DnaK hydrolyzes its bound ATP, resulting in the formation of a stable complex. GrpE releases ADP from DnaK; ATP binding to DnaK triggers the release of the substrate protein, thus completing the reaction cycle. Several rounds of ATP-dependent interactions between DnaJ, DnaK and GrpE are required for fully efficient folding. This is Protein GrpE from Rhodopseudomonas palustris (strain BisB5).